Reading from the N-terminus, the 232-residue chain is MKFQARVLTLYPEMFPGFLGYSLAGHALERGIWSLETVQIRDFALDKHHSVDDTPAGGGAGMVMRADVLAAALDHCPQDSPRLLMSPRGRPFDQAYARRLADDSGITLVCGRFEGVDERVIEARELEEVSIGDYILSGGETAALVILDAIIRLLPGVMGNKASAKCESFENGLLEHPQYTRPSLFEGREIPPVLTSGHHKAIADWRQSQAELLTRQRRPDLYARYDKNRQKT.

S-adenosyl-L-methionine is bound by residues Gly-111 and 131–136 (IGDYIL).

It belongs to the RNA methyltransferase TrmD family. In terms of assembly, homodimer.

It is found in the cytoplasm. The catalysed reaction is guanosine(37) in tRNA + S-adenosyl-L-methionine = N(1)-methylguanosine(37) in tRNA + S-adenosyl-L-homocysteine + H(+). In terms of biological role, specifically methylates guanosine-37 in various tRNAs. This is tRNA (guanine-N(1)-)-methyltransferase from Bartonella tribocorum (strain CIP 105476 / IBS 506).